A 303-amino-acid chain; its full sequence is Acetaldehyde dehydrogenase 1 (303 aa).

Catalysis depends on cysteine 130, which acts as the Acyl-thioester intermediate. NAD(+) contacts are provided by residues 161–169 and asparagine 272; that span reads SVGPGTRKN.

It belongs to the acetaldehyde dehydrogenase family.

It carries out the reaction acetaldehyde + NAD(+) + CoA = acetyl-CoA + NADH + H(+). This is Acetaldehyde dehydrogenase 1 from Methylibium petroleiphilum (strain ATCC BAA-1232 / LMG 22953 / PM1).